The primary structure comprises 292 residues: 4-amino-L-phenylalanine/4-methylamino-L-phenylalanine methyltransferase (292 aa).

Residue 128–132 coordinates S-adenosyl-L-methionine; the sequence is CAGPG.

This sequence belongs to the protein N5-glutamine methyltransferase family.

It carries out the reaction 4-amino-L-phenylalanine + S-adenosyl-L-methionine = 4-methylamino-L-phenylalanine + S-adenosyl-L-homocysteine + H(+). The enzyme catalyses 4-methylamino-L-phenylalanine + S-adenosyl-L-methionine = 4-dimethylamino-L-phenylalanine + S-adenosyl-L-homocysteine + H(+). Its pathway is antibiotic biosynthesis. Its function is as follows. Involved in pristinamycin I biosynthesis. Catalyzes the SAM-dependent methylation of 4-amino-L-phenylalanine (PAPA) to 4-methylamino-L-phenylalanine (MMPAPA), and of MMPAPA to 4-dimethylamino-L-phenylalanine (DMPAPA). The protein is 4-amino-L-phenylalanine/4-methylamino-L-phenylalanine methyltransferase of Streptomyces pristinaespiralis.